The primary structure comprises 466 residues: SAGFKAGVKDYKLTYYTPDYETKDTDILAAFRVTPQPGVPPEEAGAAVAAESSTGTWTTVWTDGLTNLDRYKGRCYHIEPVAGEETQFIAYVAYPLDLFEEGSVTNMFTSIVGNVFGFKALRALRLEDLRIPVAYVKTFQGPPHGIQVERDKLNKYGRPLLGCTIKPKLGLSAKNYGRAVYECLRGGLDFTKDDENVNSQPFMRWRDRFLFCAEALYKAQAETGEIKGHYLNATAGTCEEMMKRAIFARELGVPIVMHDYLTGGFTANTTLAHYCRDNGLLLHIHRAMHAVIDRQKNHGIHFRVLAKALRMSGGDHIHSGTVVGKLEGEREITLGFVDLLRDDFIEKDRSRGIYFTQDWVSLPGVLPVASGGIHVWHMPALTEIFGDDSVLQFGGGTLGHPWGNAPGAVANRVALEACVQARNEGRXXAREGNEIIREASKWSPELAAACEVWKEIKFEFEAMDTL.

K5 carries the N6,N6,N6-trimethyllysine modification. 2 residues coordinate substrate: N114 and T164. Residue K166 is the Proton acceptor of the active site. A substrate-binding site is contributed by K168. Residues K192, D194, and E195 each contribute to the Mg(2+) site. Position 192 is an N6-carboxylysine (K192). The Proton acceptor role is filled by H285. The substrate site is built by R286, H318, and S370.

It belongs to the RuBisCO large chain family. Type I subfamily. In terms of assembly, heterohexadecamer of 8 large chains and 8 small chains; disulfide-linked. The disulfide link is formed within the large subunit homodimers. Requires Mg(2+) as cofactor. The disulfide bond which can form in the large chain dimeric partners within the hexadecamer appears to be associated with oxidative stress and protein turnover.

It localises to the plastid. The protein resides in the chloroplast. It carries out the reaction 2 (2R)-3-phosphoglycerate + 2 H(+) = D-ribulose 1,5-bisphosphate + CO2 + H2O. The enzyme catalyses D-ribulose 1,5-bisphosphate + O2 = 2-phosphoglycolate + (2R)-3-phosphoglycerate + 2 H(+). Its function is as follows. RuBisCO catalyzes two reactions: the carboxylation of D-ribulose 1,5-bisphosphate, the primary event in carbon dioxide fixation, as well as the oxidative fragmentation of the pentose substrate in the photorespiration process. Both reactions occur simultaneously and in competition at the same active site. In Adoxa moschatellina (Moschatel), this protein is Ribulose bisphosphate carboxylase large chain.